Reading from the N-terminus, the 144-residue chain is Ethylene-responsive transcription factor ERF019 (144 aa).

A DNA-binding region (AP2/ERF) is located at residues 13–72 (KYKGIRRRKWGKWVSEIRVPGTRDRLWLGSFSTAEGAAVAHDVAFFCLHQPDSLESLNFP).

It belongs to the AP2/ERF transcription factor family. ERF subfamily.

It localises to the nucleus. Probably acts as a transcriptional activator. Binds to the GCC-box pathogenesis-related promoter element. May be involved in the regulation of gene expression by stress factors and by components of stress signal transduction pathways. The chain is Ethylene-responsive transcription factor ERF019 (ERF019) from Arabidopsis thaliana (Mouse-ear cress).